A 101-amino-acid polypeptide reads, in one-letter code: Signal recognition particle 19 kDa protein (101 aa).

The protein belongs to the SRP19 family. As to quaternary structure, part of the signal recognition particle protein translocation system, which is composed of SRP and FtsY. Archaeal SRP consists of a 7S RNA molecule of 300 nucleotides and two protein subunits: SRP54 and SRP19.

The protein localises to the cytoplasm. Involved in targeting and insertion of nascent membrane proteins into the cytoplasmic membrane. Binds directly to 7S RNA and mediates binding of the 54 kDa subunit of the SRP. The sequence is that of Signal recognition particle 19 kDa protein from Methanosarcina mazei (strain ATCC BAA-159 / DSM 3647 / Goe1 / Go1 / JCM 11833 / OCM 88) (Methanosarcina frisia).